A 486-amino-acid chain; its full sequence is Sensor protein PhoQ (486 aa).

The Cytoplasmic segment spans residues 1–16 (MKKLLHLFFPLSLRVR). Residues 17-37 (FLLATAAVVLVLSLAYGMVAL) form a helical membrane-spanning segment. Topologically, residues 38 to 194 (IGYSVSFDKT…LKSSYMVWSW (157 aa)) are periplasmic. Aspartate 151 and aspartate 152 together coordinate a divalent metal cation. Residues 195 to 215 (FIYVLSANLLLVIPLLWVAAW) traverse the membrane as a helical segment. One can recognise an HAMP domain in the interval 215–266 (WWSLRPIEALAKEVRELEEHNRELLNPATTRELTSLVRNLNRLLKSERERYD). The Cytoplasmic portion of the chain corresponds to 216-486 (WSLRPIEALA…GRQHSTPKDE (271 aa)). Residues 274-480 (DLTHSLKTPL…RMEVIFGRQH (207 aa)) enclose the Histidine kinase domain. A Phosphohistidine; by autocatalysis modification is found at histidine 277. Asparagine 385 serves as a coordination point for Mg(2+). ATP-binding positions include 385-393 (NVLDNACKY), 415-420 (DDGPGI), and 434-446 (RVDT…GVGL). Residue glutamine 442 participates in Mg(2+) binding.

As to quaternary structure, homodimer.

Its subcellular location is the cell inner membrane. It carries out the reaction ATP + protein L-histidine = ADP + protein N-phospho-L-histidine.. In terms of biological role, member of the two-component regulatory system PhoP/PhoQ involved in virulence, adaptation to low Mg(2+) environments and the control of acid resistance genes. In low periplasmic Mg(2+), PhoQ functions as a membrane-associated protein kinase that undergoes autophosphorylation and subsequently transfers the phosphate to PhoP, resulting in the expression of PhoP-activated genes (PAG) and repression of PhoP-repressed genes (PRG). In high periplasmic Mg(2+), acts as a protein phosphatase that dephosphorylates phospho-PhoP, which results in the repression of PG and may lead to expression of some PRG. The polypeptide is Sensor protein PhoQ (phoQ) (Escherichia coli O157:H7).